The primary structure comprises 204 residues: Putative 3-methyladenine DNA glycosylase (204 aa).

The protein belongs to the DNA glycosylase MPG family.

The sequence is that of Putative 3-methyladenine DNA glycosylase from Bacillus cytotoxicus (strain DSM 22905 / CIP 110041 / 391-98 / NVH 391-98).